The sequence spans 249 residues: Derlin-2.2 (249 aa).

Topologically, residues 1–21 (MAQAVEEWYRQMPIITRSYLT) are cytoplasmic. A helical transmembrane segment spans residues 22–42 (AAVVTTVGCTLEIISPYHLYL). Over 43 to 96 (NPKLVVQHYEIWRLVTNFLYFRKMDLDFLFHMFFLARYCKLLEENSFRGRTADF) the chain is Lumenal. Residues 97–117 (FYMLLFGATVLTGIVLIGGMI) form a helical membrane-spanning segment. Residues 118–122 (PYISE) are Cytoplasmic-facing. A helical transmembrane segment spans residues 123–143 (TFARILFLSNSLTFMMVYVWS). The Lumenal segment spans residues 144 to 152 (KHNPFIHMS). The chain crosses the membrane as a helical span at residues 153–173 (FLGLFTFTAAYLPWVLLGFSI). The Cytoplasmic segment spans residues 174-249 (LVGSSTWVDL…GAIGVDPQAQ (76 aa)).

Belongs to the derlin family. As to expression, expressed in roots, stalks, leaves, immature ears, embryo and endosperm.

It is found in the endoplasmic reticulum membrane. In terms of biological role, may be involved in the degradation process of specific misfolded endoplasmic reticulum (ER) luminal proteins. The polypeptide is Derlin-2.2 (DER2.2) (Zea mays (Maize)).